Here is a 93-residue protein sequence, read N- to C-terminus: Small ribosomal subunit protein uS19 (93 aa).

It belongs to the universal ribosomal protein uS19 family.

In terms of biological role, protein S19 forms a complex with S13 that binds strongly to the 16S ribosomal RNA. This chain is Small ribosomal subunit protein uS19, found in Limosilactobacillus fermentum (strain NBRC 3956 / LMG 18251) (Lactobacillus fermentum).